Here is a 99-residue protein sequence, read N- to C-terminus: Acylphosphatase (99 aa).

An Acylphosphatase-like domain is found at 11–97 (ARRIHVKGKV…VVAQGFTQKP (87 aa)). Catalysis depends on residues arginine 26 and asparagine 44.

Belongs to the acylphosphatase family.

It catalyses the reaction an acyl phosphate + H2O = a carboxylate + phosphate + H(+). In Rhizorhabdus wittichii (strain DSM 6014 / CCUG 31198 / JCM 15750 / NBRC 105917 / EY 4224 / RW1) (Sphingomonas wittichii), this protein is Acylphosphatase (acyP).